The chain runs to 470 residues: Protein ASPARTIC PROTEASE IN GUARD CELL 2 (470 aa).

The signal sequence occupies residues 1-19 (MLLPLFFFFLHLHLHLSSS). The Peptidase A1 domain maps to 131–466 (YFVRIGVGSP…DGANGFVGFG (336 aa)). Residue D149 is part of the active site. 6 cysteine pairs are disulfide-bonded: C159–C162, C165–C239, C186–C204, C191–C199, C278–C470, and C389–C431. D350 is a catalytic residue.

Belongs to the peptidase A1 family.

Functionally, aspartic protease that may be involved in drought avoidance through abscisic acid signaling. The chain is Protein ASPARTIC PROTEASE IN GUARD CELL 2 (ASPG2) from Arabidopsis thaliana (Mouse-ear cress).